The sequence spans 87 residues: Defensin-like protein 176 (87 aa).

An N-terminal signal peptide occupies residues 1–23; the sequence is MAKATSSLVVPIIFLVIFALVEQ. 4 disulfides stabilise this stretch: Cys-27-Cys-66, Cys-36-Cys-55, Cys-39-Cys-60, and Cys-43-Cys-62.

It belongs to the DEFL family.

The protein resides in the secreted. The polypeptide is Defensin-like protein 176 (LCR65) (Arabidopsis thaliana (Mouse-ear cress)).